Here is a 56-residue protein sequence, read N- to C-terminus: Large ribosomal subunit protein bL32 (56 aa).

A compositionally biased stretch (basic residues) spans methionine 1 to arginine 16. Residues methionine 1–lysine 56 are disordered.

Belongs to the bacterial ribosomal protein bL32 family.

The chain is Large ribosomal subunit protein bL32 from Idiomarina loihiensis (strain ATCC BAA-735 / DSM 15497 / L2-TR).